The chain runs to 347 residues: Cytosolic sulfotransferase 14 (347 aa).

Residue 87–92 (KSGTTW) coordinates 3'-phosphoadenylyl sulfate. The active-site Proton acceptor is His-155. 3'-phosphoadenylyl sulfate contacts are provided by residues Arg-177, Ser-185, Tyr-244, and 310–312 (RKG).

Belongs to the sulfotransferase 1 family.

It is found in the cytoplasm. Functionally, sulfotransferase that utilizes 3'-phospho-5'-adenylyl sulfate (PAPS) as sulfonate donor. Not active with 11-hydroxyjasmonate or 12-hydroxyjasmonate. This is Cytosolic sulfotransferase 14 (SOT14) from Arabidopsis thaliana (Mouse-ear cress).